Reading from the N-terminus, the 121-residue chain is Basic phospholipase A2 3 (121 aa).

7 disulfide bridges follow: Cys-26-Cys-115, Cys-28-Cys-44, Cys-43-Cys-95, Cys-49-Cys-121, Cys-50-Cys-88, Cys-57-Cys-81, and Cys-75-Cys-86. Ca(2+) is bound by residues Tyr-27, Gly-29, and Gly-31. His-47 is an active-site residue. Asp-48 lines the Ca(2+) pocket. Asp-89 is a catalytic residue.

This sequence belongs to the phospholipase A2 family. Group II subfamily. D49 sub-subfamily. It depends on Ca(2+) as a cofactor. Expressed by the venom gland.

The protein localises to the secreted. It catalyses the reaction a 1,2-diacyl-sn-glycero-3-phosphocholine + H2O = a 1-acyl-sn-glycero-3-phosphocholine + a fatty acid + H(+). In terms of biological role, PLA2 catalyzes the calcium-dependent hydrolysis of the 2-acyl groups in 3-sn-phosphoglycerides. In Daboia russelii (Russel's viper), this protein is Basic phospholipase A2 3.